The following is a 214-amino-acid chain: STS14 protein (214 aa).

The N-terminal stretch at 1–19 (MFVLSTAMACLVYIYIYIY) is a signal peptide. 3 tandem repeats follow at residues 13–14 (YI), 15–16 (YI), and 17–18 (YI). The segment at 13–18 (YIYIYI) is 3 X 2 AA tandem repeats of Y-I. The 121-residue stretch at 80-200 (LDAHNKARSE…YEGPATLTVC (121 aa)) folds into the SCP domain.

Belongs to the CRISP family. Highly expressed in the stigma and stylar cortex throughout pistil development. Not expressed in other organs.

In terms of biological role, may protect the outer tissues of the pistil from pathogen attack. The chain is STS14 protein (STS14) from Solanum tuberosum (Potato).